A 174-amino-acid polypeptide reads, in one-letter code: N5-carboxyaminoimidazole ribonucleotide mutase (174 aa).

The substrate site is built by serine 15, aspartate 18, and arginine 45.

The protein belongs to the AIR carboxylase family. Class I subfamily.

It catalyses the reaction 5-carboxyamino-1-(5-phospho-D-ribosyl)imidazole + H(+) = 5-amino-1-(5-phospho-D-ribosyl)imidazole-4-carboxylate. The protein operates within purine metabolism; IMP biosynthesis via de novo pathway; 5-amino-1-(5-phospho-D-ribosyl)imidazole-4-carboxylate from 5-amino-1-(5-phospho-D-ribosyl)imidazole (N5-CAIR route): step 2/2. Functionally, catalyzes the conversion of N5-carboxyaminoimidazole ribonucleotide (N5-CAIR) to 4-carboxy-5-aminoimidazole ribonucleotide (CAIR). In Pyrococcus abyssi (strain GE5 / Orsay), this protein is N5-carboxyaminoimidazole ribonucleotide mutase.